The primary structure comprises 900 residues: DNA mismatch repair protein MutS (900 aa).

637–644 (GPNMAGKS) is an ATP binding site.

It belongs to the DNA mismatch repair MutS family.

Its function is as follows. This protein is involved in the repair of mismatches in DNA. It is possible that it carries out the mismatch recognition step. This protein has a weak ATPase activity. In Methanosarcina mazei (strain ATCC BAA-159 / DSM 3647 / Goe1 / Go1 / JCM 11833 / OCM 88) (Methanosarcina frisia), this protein is DNA mismatch repair protein MutS.